The sequence spans 784 residues: DNA repair and recombination protein RAD54-like (784 aa).

The segment at 2-9 is required for chromatin remodeling, strand pairing activities and coupling of ATPase activity; it reads RRSLAPSQ. Threonine 22 carries the phosphothreonine modification. The Helicase ATP-binding domain maps to 169–344; the sequence is EGKKGNFNGC…FSLVNFVNPE (176 aa). 182–189 provides a ligand contact to ATP; it reads DEMGLGKT. The short motif at 295 to 298 is the DEGH box element; sequence DEGH. Residues 501 to 658 form the Helicase C-terminal domain; it reads LLDFMLATIR…NNESAEKHFT (158 aa). The segment at 742-784 is disordered; it reads QAIKESEETKQEAEDTSIPAKSKRKRSTTPESDDCNDEDFKGF. The segment covering 745 to 754 has biased composition (basic and acidic residues); the sequence is KESEETKQEA.

Belongs to the SNF2/RAD54 helicase family. In terms of assembly, interacts (via N-terminus) with spn-A/Rad51.

Its subcellular location is the nucleus. Involved in mitotic DNA repair and meiotic recombination. Functions in the recombinational DNA repair pathway. Essential for interhomolog gene conversion (GC), but may have a less important role in intersister GC than spn-A/Rad51. In the presence of DNA, spn-A/Rad51 enhances the ATPase activity of okr/Rad54. The sequence is that of DNA repair and recombination protein RAD54-like from Drosophila willistoni (Fruit fly).